Reading from the N-terminus, the 67-residue chain is Conotoxin Cl14c (67 aa).

An N-terminal signal peptide occupies residues 1 to 20; the sequence is MNVTVMFLVLLLLTMPLTDG. Positions 21–48 are excised as a propeptide; that stretch reads FNIRATNGGELFGPVQRDAGNVLDHGFQ.

Belongs to the conotoxin L superfamily. In terms of processing, contains 2 disulfide bonds. Expressed by the venom duct.

The protein localises to the secreted. This is Conotoxin Cl14c from Californiconus californicus (California cone).